Reading from the N-terminus, the 828-residue chain is Conserved oligomeric Golgi complex subunit 3 (828 aa).

Residue Ala2 is modified to N-acetylalanine. The disordered stretch occupies residues 504–543; that stretch reads DEQKKVPSEASFSDVHLEEGESNSLTKSGSTESLNPRPQT. Positions 525–543 are enriched in polar residues; sequence SNSLTKSGSTESLNPRPQT. The residue at position 663 (Ser663) is a Phosphoserine.

Belongs to the COG3 family. In terms of assembly, component of the conserved oligomeric Golgi complex which is composed of eight different subunits and is required for normal Golgi morphology and localization. Interacts with TMEM115. In terms of tissue distribution, widely expressed with highest levels in pancreas and testis and lowest levels in lung.

Its subcellular location is the golgi apparatus. It localises to the golgi stack membrane. In terms of biological role, involved in ER-Golgi transport. Also involved in retrograde (Golgi to ER) transport. The polypeptide is Conserved oligomeric Golgi complex subunit 3 (COG3) (Homo sapiens (Human)).